We begin with the raw amino-acid sequence, 437 residues long: Cysteine--tRNA ligase (437 aa).

Cys-31 contributes to the Zn(2+) binding site. The 'HIGH' region signature appears at 33-43 (PTVYNDLHLGN). The Zn(2+) site is built by Cys-205, His-230, and Glu-234. Residues 262-266 (KMSKS) carry the 'KMSKS' region motif. Lys-265 is an ATP binding site.

Belongs to the class-I aminoacyl-tRNA synthetase family. As to quaternary structure, monomer. Requires Zn(2+) as cofactor.

It localises to the cytoplasm. It catalyses the reaction tRNA(Cys) + L-cysteine + ATP = L-cysteinyl-tRNA(Cys) + AMP + diphosphate. The chain is Cysteine--tRNA ligase (cysS) from Mycoplasma pneumoniae (strain ATCC 29342 / M129 / Subtype 1) (Mycoplasmoides pneumoniae).